Reading from the N-terminus, the 298-residue chain is Syntaxin-4 (298 aa).

At 1-274 (MRDRTHELRQ…NQKKARKKKV (274 aa)) the chain is on the cytoplasmic side. Phosphoserine occurs at positions 15, 29, 35, 36, 117, 208, and 248. The stretch at 38 to 163 (DDEFFQKVQT…ERIRRQLKIT (126 aa)) forms a coiled coil. The interaction with CENPF stretch occupies residues 154–298 (ERIRRQLKIT…VIIGITITVG (145 aa)). The region spanning 200 to 262 (LNEISARHSE…ERGQEHVKIA (63 aa)) is the t-SNARE coiled-coil homology domain. Residues 275–295 (MIAICVSVTVLILAVIIGITI) form a helical; Anchor for type IV membrane protein membrane-spanning segment. Topologically, residues 296–298 (TVG) are extracellular.

It belongs to the syntaxin family. In terms of assembly, found in a complex with VAMP8 and SNAP23. Detected in a complex with SNAP23 and STXBP4. Interacts with SNAP23 and SNAPIN. Interacts with VAMP2. Interacts with LLGL1. Interacts (via C-terminus) with CENPF. Interacts with DOC2B. Interacts with STXBP3; excludes interaction with DOC2B and SNAP25. Interacts with STXBP4; excludes interaction with VAMP2. Component of the SNARE complex composed of STX4, SNAP23 and VAMP7 that interacts with SYT7 during lysosomal exocytosis. Interacts with STXBP6. Interacts with STXBP5L. As to expression, expressed in all tissues tested including adipose, brain, testis, intestine, liver, heart, spleen, skeletal muscle and kidney.

Its subcellular location is the cell membrane. The protein localises to the cell projection. It localises to the neuron projection. It is found in the stereocilium. In terms of biological role, plasma membrane t-SNARE that mediates docking of transport vesicles. Necessary for the translocation of SLC2A4 from intracellular vesicles to the plasma membrane. In neurons, recruited at neurite tips to membrane domains rich in the phospholipid 1-oleoyl-2-palmitoyl-PC (OPPC) which promotes neurite tip surface expression of the dopamine transporter SLC6A3/DAT by facilitating fusion of SLC6A3-containing transport vesicles with the plasma membrane. Together with STXB3 and VAMP2, may also play a role in docking/fusion of intracellular GLUT4-containing vesicles with the cell surface in adipocytes and in docking of synaptic vesicles at presynaptic active zones. Required for normal hearing. This chain is Syntaxin-4 (Stx4), found in Rattus norvegicus (Rat).